Consider the following 369-residue polypeptide: Peptide chain release factor 2 (369 aa).

Q250 carries the post-translational modification N5-methylglutamine.

This sequence belongs to the prokaryotic/mitochondrial release factor family. Post-translationally, methylated by PrmC. Methylation increases the termination efficiency of RF2.

Its subcellular location is the cytoplasm. Functionally, peptide chain release factor 2 directs the termination of translation in response to the peptide chain termination codons UGA and UAA. The chain is Peptide chain release factor 2 (prfB) from Rickettsia typhi (strain ATCC VR-144 / Wilmington).